The primary structure comprises 542 residues: MAAATAAVFALLMASALAGAAAGGDIVHHDDEAPKIPGCSNDFILVKVQSWVNGKEDDEYVGVGARFGPQIVSKEKHANRTRLMLADPIDCCTSPKEKVSGDILLVQRGKCKFTKKAKFAEAAGASGIIIINHVHELYKMVCEKNETDLDINIPAVLLPRDAGFALHTVLTSGNSVSVQQYSPDRPVVDTAEVFLWLMAVGTVLCASYWSAWSAREALCEQEKLLKDGREVLLNVENGSSSGMIDINVASAIMFVVVASCFLIMLYKMMSSWFVELLVVIFCVGGVEGLQTCLVALLSRWFRAASESFFKVPFFGAVSYLTLAVSPFCIVFAVLWAVHRHFTYAWIGQDILGIALIITVIQIVRVPNLKVGSVLLSCAFFYDIFWVFVSKRWFHESVMIVVARGDKTDEDGVPMLLKIPRMFDPWGGYSIIGFGDILLPGLLVAFALRYDWAAKKSLQTGYFLWSMVAYGSGLLITYVALNLMDGHGQPALLYIVPFTLGALISLGWKRGELWNLWSKGEPERVCPHHMHMQPQPKTPPLVQ.

The first 23 residues, 1-23 (MAAATAAVFALLMASALAGAAAG), serve as a signal peptide directing secretion. The Lumenal segment spans residues 24 to 192 (GDIVHHDDEA…PDRPVVDTAE (169 aa)). N-linked (GlcNAc...) asparagine glycans are attached at residues N79 and N145. A PA domain is found at 92–167 (CTSPKEKVSG…LPRDAGFALH (76 aa)). A helical membrane pass occupies residues 193–213 (VFLWLMAVGTVLCASYWSAWS). Topologically, residues 214-245 (AREALCEQEKLLKDGREVLLNVENGSSSGMID) are cytoplasmic. Residues 246–266 (INVASAIMFVVVASCFLIMLY) traverse the membrane as a helical segment. The Lumenal portion of the chain corresponds to 267–275 (KMMSSWFVE). Residues 276–296 (LLVVIFCVGGVEGLQTCLVAL) traverse the membrane as a helical segment. The Cytoplasmic portion of the chain corresponds to 297-316 (LSRWFRAASESFFKVPFFGA). Residues 317–337 (VSYLTLAVSPFCIVFAVLWAV) form a helical membrane-spanning segment. Over 338-342 (HRHFT) the chain is Lumenal. A helical transmembrane segment spans residues 343–363 (YAWIGQDILGIALIITVIQIV). Over 364–367 (RVPN) the chain is Cytoplasmic. The chain crosses the membrane as a helical span at residues 368 to 388 (LKVGSVLLSCAFFYDIFWVFV). D382 is a catalytic residue. Over 389–426 (SKRWFHESVMIVVARGDKTDEDGVPMLLKIPRMFDPWG) the chain is Lumenal. Residues 427–447 (GYSIIGFGDILLPGLLVAFAL) traverse the membrane as a helical segment. Residue D435 is part of the active site. Over 448-459 (RYDWAAKKSLQT) the chain is Cytoplasmic. A helical membrane pass occupies residues 460-480 (GYFLWSMVAYGSGLLITYVAL). The Lumenal segment spans residues 481-486 (NLMDGH). Residues 487–507 (GQPALLYIVPFTLGALISLGW) form a helical membrane-spanning segment. Positions 489–491 (PAL) match the PAL motif. The Cytoplasmic portion of the chain corresponds to 508 to 542 (KRGELWNLWSKGEPERVCPHHMHMQPQPKTPPLVQ).

Belongs to the peptidase A22B family. In terms of processing, glycosylated.

It localises to the endosome membrane. Intramembrane-cleaving aspartic protease (I-CLiP) that cleaves type II membrane signal peptides in the hydrophobic plane of the membrane. The sequence is that of Signal peptide peptidase-like 5 (SPPL5) from Oryza sativa subsp. japonica (Rice).